The following is a 425-amino-acid chain: Serine--tRNA ligase (425 aa).

231-233 (TAE) contacts L-serine. 262-264 (RSE) is a binding site for ATP. Residue glutamate 285 coordinates L-serine. Position 349–352 (349–352 (EISS)) interacts with ATP. Residue serine 385 participates in L-serine binding.

It belongs to the class-II aminoacyl-tRNA synthetase family. Type-1 seryl-tRNA synthetase subfamily. Homodimer. The tRNA molecule binds across the dimer.

It localises to the cytoplasm. The enzyme catalyses tRNA(Ser) + L-serine + ATP = L-seryl-tRNA(Ser) + AMP + diphosphate + H(+). It catalyses the reaction tRNA(Sec) + L-serine + ATP = L-seryl-tRNA(Sec) + AMP + diphosphate + H(+). The protein operates within aminoacyl-tRNA biosynthesis; selenocysteinyl-tRNA(Sec) biosynthesis; L-seryl-tRNA(Sec) from L-serine and tRNA(Sec): step 1/1. Functionally, catalyzes the attachment of serine to tRNA(Ser). Is also able to aminoacylate tRNA(Sec) with serine, to form the misacylated tRNA L-seryl-tRNA(Sec), which will be further converted into selenocysteinyl-tRNA(Sec). This Bartonella bacilliformis (strain ATCC 35685 / KC583 / Herrer 020/F12,63) protein is Serine--tRNA ligase.